The chain runs to 387 residues: MTVINMKDVDLANKRVLIREDLNVPVKDGKVTSDARIRAALPTIKMALEAGAKVMVMSHLGRPTEGQYEEEYSLQPVATHIAGLLGQDVPLVKDWLDGVEVESGQLVLVENVRFNLGEKKDDEALSKKMAALCDVFVMDAFGTAHRAQASTHGVAKFAPIACAGPLLSAELEALEKALAKPARPMAAIVGGSKVSTKLTVLESLSDKVDQLIVGGGIANTFLAAAGFPVGKSLYEEDLIPQAKALMAKTSIPLPEDVVVATAFAPDAVATVKDAADVGPDDMILDIGPKAAAAFAALLEESQTIIWNGPVGVFEFDQFGGGTKALAMAIANSKGFSIAGGGDTLAAVDKYDIADQVSYISTGGGAFLEFVEGKVLPAVAMLESRAQN.

Residues 21-23 (DLN), R36, 59-62 (HLGR), R113, and R146 contribute to the substrate site. ATP contacts are provided by residues K197, E314, and 340 to 343 (GGDT).

The protein belongs to the phosphoglycerate kinase family. As to quaternary structure, monomer.

Its subcellular location is the cytoplasm. The catalysed reaction is (2R)-3-phosphoglycerate + ATP = (2R)-3-phospho-glyceroyl phosphate + ADP. It functions in the pathway carbohydrate degradation; glycolysis; pyruvate from D-glyceraldehyde 3-phosphate: step 2/5. The protein is Phosphoglycerate kinase of Marinomonas sp. (strain MWYL1).